The chain runs to 38 residues: Bacteriocin BAC79 (38 aa).

With respect to regulation, the antimicrobial activity of BAC79 was completely lost after treatment with enzymes trypsin, pepsin, proteinase-K, and carboxypeptidase, while there was no loss of activity with either amylase or lipase. Has antibacterial activity against a wide spectrum of Gram-positive and Gram-negative bacteria, including L.monocytogenes which is inhibited through disruption of the cell membrane. This chain is Bacteriocin BAC79, found in Weissella confusa (Lactobacillus confusus).